Reading from the N-terminus, the 317-residue chain is Porphobilinogen deaminase (317 aa).

Cysteine 242 carries the S-(dipyrrolylmethanemethyl)cysteine modification.

This sequence belongs to the HMBS family. In terms of assembly, monomer. It depends on dipyrromethane as a cofactor.

It carries out the reaction 4 porphobilinogen + H2O = hydroxymethylbilane + 4 NH4(+). It participates in porphyrin-containing compound metabolism; protoporphyrin-IX biosynthesis; coproporphyrinogen-III from 5-aminolevulinate: step 2/4. In terms of biological role, tetrapolymerization of the monopyrrole PBG into the hydroxymethylbilane pre-uroporphyrinogen in several discrete steps. The sequence is that of Porphobilinogen deaminase from Colwellia psychrerythraea (strain 34H / ATCC BAA-681) (Vibrio psychroerythus).